Consider the following 579-residue polypeptide: Mitogen-activated protein kinase kinase kinase 7 (579 aa).

An interaction with MAPK8IP1 region spans residues 1-300 (MSTASAASSS…FPGADEPLQY (300 aa)). A Protein kinase domain is found at 36–291 (IEVEEVVGRG…KIMTHLMRYF (256 aa)). Residues 42 to 50 (VGRGAFGVV) and Lys63 each bind ATP. A Glycyl lysine isopeptide (Lys-Gly) (interchain with G-Cter in ubiquitin) cross-link involves residue Lys72. The active-site Proton acceptor is Asp156. Lys158 is covalently cross-linked (Glycyl lysine isopeptide (Lys-Gly) (interchain with G-Cter in ubiquitin)). Thr184 and Thr187 each carry phosphothreonine; by autocatalysis. Ser192 bears the Phosphoserine; by autocatalysis mark. Residue Lys209 forms a Glycyl lysine isopeptide (Lys-Gly) (interchain with G-Cter in ubiquitin) linkage. 2 disordered regions span residues 301-338 (PCQYSDEGQSNSATSTGSFMDIASTNTSNKSDTNMEQV) and 354-391 (KNQAKQQSESGRLSLGASRGSSVESLPPTSEGKRMSAD). Residues 306–338 (DEGQSNSATSTGSFMDIASTNTSNKSDTNMEQV) are compositionally biased toward polar residues. The segment covering 361-375 (SESGRLSLGASRGSS) has biased composition (low complexity). A phosphoserine mark is found at Ser367, Ser389, and Ser412. Positions 416–425 (LTVTGTEPGQ) are enriched in polar residues. A disordered region spans residues 416-466 (LTVTGTEPGQVSSRSSSPSVRMITTSGPTSEKPARSHPWTPDDSTDTNGSD). The segment covering 426–436 (VSSRSSSPSVR) has biased composition (low complexity). Phosphoserine is present on Ser428.

Belongs to the protein kinase superfamily. STE Ser/Thr protein kinase family. MAP kinase kinase kinase subfamily. In terms of assembly, can form homodimer. Binds both upstream activators and downstream substrates in multimolecular complexes. Interacts with TAB1/MAP3K7IP1, TAB2/MAP3K7IP2 and TAB3/MAP3K7IP3. Identified in the TRIKA2 complex composed of MAP3K7/TAK1, TAB1/MAP3K7IP1 and TAB2/MAP3K7IP2. Interacts with PPM1L and PPM1B/PP2CB. Interaction with PP2A and PPP6C leads to its repressed activity. Interacts with TRAF6 and TAB1/MAP3K7IP1; during IL-1 signaling. Interacts with TAOK1 and TAOK2; interaction with TAOK2 interferes with MAP3K7 interaction with IKKA, thus preventing NF-kappa-B activation. Interacts with DYNC2I2 (via WD domains). Interacts with CYLD and RBCK1. Interacts with TGFBR1; induces MAP3K7/TAK1 activation by TRAF6. Interacts with MAPK8IP1 and SMAD6. Interacts with isoform 1 of VRK2. Interacts with DAB2; the interaction is induced by TGF-beta stimulation and may mediate TGF-beta stimulated JNK activation. Interacts with TRIM5. Part of a complex containing ITCH, NDFIP1 and MAP3K7. Interacts with PLEKHM1 (via N- and C-terminus). Interacts with TRIM8. Found in a complex with SH3RF1, RAC2, MAP2K7/MKK7, MAPK8IP1/JIP1, MAPK8/JNK1 and MAPK9/JNK2. Interacts with SASH1. Interacts with RIPK1. Mg(2+) serves as cofactor. Post-translationally, association with TAB1/MAP3K7IP1 promotes autophosphorylation and subsequent activation. Association with TAB2/MAP3K7IP2, itself associated with free unanchored Lys-63 polyubiquitin chain, promotes autophosphorylation and subsequent activation of MAP3K7. Dephosphorylation at Thr-187 by PP2A and PPP6C leads to inactivation. 'Lys-48'-linked polyubiquitination at Lys-72 is induced by TNFalpha, and leads to proteasomal degradation. Undergoes 'Lys-48'-linked polyubiquitination catalyzed by ITCH. 'Lys-63'-linked polyubiquitination at Lys-158 by TRIM8 does not lead to proteasomal degradation but contributes to autophosphorylation and activation. Deubiquitinated by CYLD, a protease that selectively cleaves 'Lys-63'-linked ubiquitin chains.Deubiquitinated by USP19; leading to negative regulation of TNF-alpha- and IL-1beta-triggered NF-kappa-B activation.

The protein localises to the cytoplasm. The protein resides in the cell membrane. The enzyme catalyses L-seryl-[protein] + ATP = O-phospho-L-seryl-[protein] + ADP + H(+). The catalysed reaction is L-threonyl-[protein] + ATP = O-phospho-L-threonyl-[protein] + ADP + H(+). Activated by pro-inflammatory cytokines and in response to physical and chemical stresses, including osmotic stress, oxidative stress, arsenic and ultraviolet light irradiation. Activated by 'Lys-63'-linked polyubiquitination and by autophosphorylation. Association with TAB1/MAP3K7IP1 and TAB2/MAP3K7IP2 promotes activation through autophosphorylation, whereas PPM1B/PP2CB, PP2A and PPP6C dephosphorylation leads to inactivation. Ceramides are also able to activate MAP3K7/TAK1. Functionally, serine/threonine kinase which acts as an essential component of the MAP kinase signal transduction pathway. Plays an important role in the cascades of cellular responses evoked by changes in the environment. Mediates signal transduction of TRAF6, various cytokines including interleukin-1 (IL-1), transforming growth factor-beta (TGFB), TGFB-related factors like BMP2 and BMP4, toll-like receptors (TLR), tumor necrosis factor receptor CD40 and B-cell receptor (BCR). Once activated, acts as an upstream activator of the MKK/JNK signal transduction cascade and the p38 MAPK signal transduction cascade through the phosphorylation and activation of several MAP kinase kinases like MAP2K1/MEK1, MAP2K3/MKK3, MAP2K6/MKK6 and MAP2K7/MKK7. These MAP2Ks in turn activate p38 MAPKs and c-jun N-terminal kinases (JNKs); both p38 MAPK and JNK pathways control the transcription factors activator protein-1 (AP-1). Independently of MAP2Ks and p38 MAPKs, acts as a key activator of NF-kappa-B by promoting activation of the I-kappa-B-kinase (IKK) core complex. Mechanistically, recruited to polyubiquitin chains of RIPK2 and IKBKG/NEMO via TAB2/MAP3K7IP2 and TAB3/MAP3K7IP3, and catalyzes phosphorylation and activation of IKBKB/IKKB component of the IKK complex, leading to NF-kappa-B activation. In osmotic stress signaling, plays a major role in the activation of MAPK8/JNK1, but not that of NF-kappa-B. Promotes TRIM5 capsid-specific restriction activity. Phosphorylates RIPK1 at 'Ser-321' which positively regulates RIPK1 interaction with RIPK3 to promote necroptosis but negatively regulates RIPK1 kinase activity and its interaction with FADD to mediate apoptosis. Phosphorylates STING1 in response to cGAMP-activation, promoting association between STEEP1 and STING1 and STING1 translocation to COPII vesicles. The protein is Mitogen-activated protein kinase kinase kinase 7 (Map3k7) of Mus musculus (Mouse).